The chain runs to 147 residues: Probable inactive ribonuclease-like protein 12 (147 aa).

Positions 1–20 (MIIMVIIFLVLLFWENEVND) are cleaved as a signal peptide.

The protein belongs to the pancreatic ribonuclease family.

It is found in the secreted. In terms of biological role, does not exhibit any ribonuclease activity. This is Probable inactive ribonuclease-like protein 12 (RNASE12) from Homo sapiens (Human).